Reading from the N-terminus, the 406-residue chain is Tyrosine-specific transport system 2 (406 aa).

Helical transmembrane passes span 7–27 (FGSA…AMPL), 38–58 (LLLL…FVEV), 83–103 (IFAT…YITG), 119–139 (AMSL…FVVV), 150–170 (VLFI…LPKV), 183–203 (AFVV…VIMA), 219–239 (AILI…LATH), 279–299 (VFSS…VFEG), 314–334 (FVLT…YPEG), 335–355 (FITA…ILPI), and 376–396 (NFAL…PFLI).

It belongs to the amino acid/polyamine transporter 2 family. Mtr/TnaB/TyrP permease subfamily.

It is found in the cell inner membrane. It catalyses the reaction L-tyrosine(in) + H(+)(in) = L-tyrosine(out) + H(+)(out). Transports tyrosine across the cytoplasmic membrane. The transport system is energized by the proton motive force. This chain is Tyrosine-specific transport system 2 (tyrP-B), found in Haemophilus influenzae (strain ATCC 51907 / DSM 11121 / KW20 / Rd).